The chain runs to 473 residues: Photosystem II CP43 reaction center protein (473 aa).

A propeptide spanning residues 1 to 14 is cleaved from the precursor; that stretch reads MKTLYSLRRFYHVE. Residue T15 is modified to N-acetylthreonine. T15 carries the phosphothreonine modification. 5 helical membrane-spanning segments follow: residues 69 to 93, 134 to 155, 178 to 200, 255 to 275, and 291 to 312; these read LFEVAHFVPEKPMYEQGLILLPHLA, LIGPETLEESFPFFGYVWKDKN, KAVWFGGVYDTWAPGGGDVRKIT, KPFAWARRAFIWSGEAYLSYS, and WFNNTAYPSEFYGPTGPEASQA. Residue E367 participates in [CaMn4O5] cluster binding. The chain crosses the membrane as a helical span at residues 447–471; sequence RARAAAAGFEKGIDRETEPVFFMNP.

It belongs to the PsbB/PsbC family. PsbC subfamily. As to quaternary structure, PSII is composed of 1 copy each of membrane proteins PsbA, PsbB, PsbC, PsbD, PsbE, PsbF, PsbH, PsbI, PsbJ, PsbK, PsbL, PsbM, PsbT, PsbX, PsbY, PsbZ, Psb30/Ycf12, at least 3 peripheral proteins of the oxygen-evolving complex and a large number of cofactors. It forms dimeric complexes. Binds multiple chlorophylls and provides some of the ligands for the Ca-4Mn-5O cluster of the oxygen-evolving complex. It may also provide a ligand for a Cl- that is required for oxygen evolution. PSII binds additional chlorophylls, carotenoids and specific lipids. serves as cofactor.

The protein resides in the plastid. It localises to the chloroplast thylakoid membrane. Its function is as follows. One of the components of the core complex of photosystem II (PSII). It binds chlorophyll and helps catalyze the primary light-induced photochemical processes of PSII. PSII is a light-driven water:plastoquinone oxidoreductase, using light energy to abstract electrons from H(2)O, generating O(2) and a proton gradient subsequently used for ATP formation. The chain is Photosystem II CP43 reaction center protein from Staurastrum punctulatum (Green alga).